A 293-amino-acid polypeptide reads, in one-letter code: Ethanolamine ammonia-lyase small subunit (293 aa).

2 residues coordinate adenosylcob(III)alamin: Val-207 and Glu-228.

It belongs to the EutC family. The basic unit is a heterodimer which dimerizes to form tetramers. The heterotetramers trimerize; 6 large subunits form a core ring with 6 small subunits projecting outwards. It depends on adenosylcob(III)alamin as a cofactor.

The protein resides in the bacterial microcompartment. It catalyses the reaction ethanolamine = acetaldehyde + NH4(+). The protein operates within amine and polyamine degradation; ethanolamine degradation. Functionally, catalyzes the deamination of various vicinal amino-alcohols to oxo compounds. Allows this organism to utilize ethanolamine as the sole source of nitrogen and carbon in the presence of external vitamin B12. This is Ethanolamine ammonia-lyase small subunit from Clostridioides difficile (strain 630) (Peptoclostridium difficile).